The sequence spans 428 residues: 3-phosphoshikimate 1-carboxyvinyltransferase (428 aa).

3-phosphoshikimate contacts are provided by lysine 23, serine 24, and arginine 28. Lysine 23 is a phosphoenolpyruvate binding site. Positions 97 and 125 each coordinate phosphoenolpyruvate. The 3-phosphoshikimate site is built by serine 170, serine 171, glutamine 172, serine 198, aspartate 314, asparagine 337, and lysine 341. Glutamine 172 is a binding site for phosphoenolpyruvate. Aspartate 314 (proton acceptor) is an active-site residue. Phosphoenolpyruvate-binding residues include arginine 345, arginine 387, and lysine 412.

This sequence belongs to the EPSP synthase family. Monomer.

It is found in the cytoplasm. It carries out the reaction 3-phosphoshikimate + phosphoenolpyruvate = 5-O-(1-carboxyvinyl)-3-phosphoshikimate + phosphate. It functions in the pathway metabolic intermediate biosynthesis; chorismate biosynthesis; chorismate from D-erythrose 4-phosphate and phosphoenolpyruvate: step 6/7. In terms of biological role, catalyzes the transfer of the enolpyruvyl moiety of phosphoenolpyruvate (PEP) to the 5-hydroxyl of shikimate-3-phosphate (S3P) to produce enolpyruvyl shikimate-3-phosphate and inorganic phosphate. The protein is 3-phosphoshikimate 1-carboxyvinyltransferase of Buchnera aphidicola subsp. Schizaphis graminum (strain Sg).